We begin with the raw amino-acid sequence, 575 residues long: MTIATSSRPRDVQVADIGEHTLILRSRTWERLKFEVEYSRQRGTTANSYLIQADKKALIDPPGESFTAIYLEQLAQYLDFTTLDYIILGHVNPNRRVTLQELLSKAPQATLICSRPAANALKTAFPEWESRIQAVRFEDILDLGQGHQLTFVTAPTPRWPDGLFTYDSATKILYTDKFFGAHICEDTLFDEDWKKLDAERHYYFDCLHAPQAKQVEAALDKVVMLGARSYAPGHGPVVRYSLSRFTYDYRQWCQGQKSQDLNVALLYTSAYGNTGILANAIAQGLVQNDVNVQSVNCELADTAEITRIVEACDGIIIGSPTLGGHAPTQIQTALGIVLSTAAKTKLAGVFGSYGWSGEAIDLIESKLKDANYRLGFDTIRVRFSPTPEILQQCQAAGATFAQTLKKNKKLRTPRQVIPEAKIDRTEQAVGRIIGSLCVVTTRDQESHKGILTSWVSQATFNPPGIMMAIAQEQNADLMSHTGDQFVLNILKEGRNVRRYFSRQSTLGDNPFANLKTKTADNGCLILTEALAYLECTVTNQLECGDRLLIYAVVDKGEVLANDGVTAVEHRKSGSH.

Residues glutamine 41–histidine 234 form a zinc metallo-hydrolase region. One can recognise a Flavodoxin-like domain in the interval valine 263 to lysine 405. The segment at valine 429–histidine 575 is flavodoxin-reductase-like.

The protein in the N-terminal section; belongs to the zinc metallo-hydrolase group 3 family. In the C-terminal section; belongs to the flavodoxin reductase family. The cofactor is Fe cation.

Its function is as follows. Mediates electron transfer from NADH to oxygen, reducing it to water. This modular protein has 3 redox cofactors, in other organisms the same activity requires 2 or 3 proteins. In Nostoc sp. (strain PCC 7120 / SAG 25.82 / UTEX 2576), this protein is Putative diflavin flavoprotein A 4 (dfa4).